Reading from the N-terminus, the 276-residue chain is MGCGPSQPAEDRRRVRAPKKGWKEEFKADVSVPHTGENCSPRMEAALTKNTVDIAEGLEQVQMGSLPGTISENSPSPSERNRRVNSDLVTNGLINKPQSLESRERQKSSDILEELIVQGIIQSHSKVFRNGESYDVTLTTTEKPLRKPPSRLKKLKIKKQVKDFTMKDIEEKMEAAEERRKTKEEEIRKRLRSDRLLPSANHSDSAELDGAEVAFAKGLQRVRSAGFEPSDLQGGKPLKRKKSKCDATLIDRNESDESFGVVESDMSYNQADDIVY.

Disordered stretches follow at residues 1–40 (MGCG…ENCS), 61–106 (VQMG…RERQ), and 226–250 (GFEP…ATLI). G2 carries N-myristoyl glycine lipidation. Composition is skewed to polar residues over residues 68–78 (GTISENSPSPS) and 87–100 (DLVT…PQSL). An SLD domain is found at 118–244 (QGIIQSHSKV…GKPLKRKKSK (127 aa)).

The polypeptide is Stathmin domain-containing protein 1 (STMND1) (Homo sapiens (Human)).